A 299-amino-acid chain; its full sequence is MTTLVVHGGAGRWAVSEEKRQAVKRALEDAVREGLAAMLRGGAVDGVVAAVEYMEASGLFNAGYGSVYALDGRVYMDAGIMDGKTGRAGAVAAVEGVKSAVRLARAVMELTDHVILAGEGATLLAKRLGLTAPFYKFYSEEKNRQFSQVLEEARQGKWHFKRVLDFADTVGAVALDKDGNLAAATSTGGVWLKLPGRVGDSPLPGAGFWAENGVGAFSATGVGEVIILSTLSLRARDLLEQTGDIRAAVEKAVEYVTRRFGPDTAGLIGVDARGRFAFSYNTRAMARGWGKPGEVRAEL.

The active-site Nucleophile is the Thr169. Substrate-binding positions include 197–200 (RVGD) and 220–223 (TGVG).

Belongs to the Ntn-hydrolase family. Heterotetramer of two alpha and two beta chains arranged as a dimer of alpha/beta heterodimers. The uncleaved protein forms homodimers. Autocleaved. Generates the alpha and beta subunits. The N-terminal residue of the beta subunit is thought to be responsible for the nucleophile hydrolase activity.

The enzyme catalyses L-asparagine + H2O = L-aspartate + NH4(+). Its activity is regulated as follows. Divalent metal ions and EDTA do not have significant effect on enzyme activity, indicating that activity is metal-independent. In terms of biological role, catalyzes the hydrolysis of L-asparagine into L-aspartate and ammonia. Also displays D-asparaginase activity, which is about 20% of the L-asparaginase activity. Does not exhibit glutaminase activity. The protein is Plant-type L-asparaginase of Pyrobaculum calidifontis (strain DSM 21063 / JCM 11548 / VA1).